The primary structure comprises 716 residues: MTELSSEARAIVEGRHSDPFHYLGCHRETDRKVVRVYLPDASEVRLIDETGEEIILTRIHDAGLFLGDLPDRAERYRLRARYGADLVELEDPYRFPPILDDFDLYLLGEGTHQRIYDKLGAHPMAMEGVDGAGFVVLAPNARAVAVVGDFNFWDRRRHPMRVRGNGYWELFIPGARAGDRYKFAITAQDGSLLPLKSDPMAFAAEVRPNTASIIFDQARLPRPTPLAATINARGVPISIYEVHLGSWRRSDGNRWLSYRELAETLPDYVRELGFTHIELMPVNEHPFDGSWGYQPTGLYAPTSRFGSPEDFAHLIDACHREGLGLLLDWVPGHFPDDPHGLGRFDGTSLYEHANPLQGRHLDWDTLIYNYGRTEVVNFLVANALFWLDRYGIDGLRVDAVASMLYLDYSRPEGGWIPNKHGGRENLEAIEFLRRFNREVFGRFPNATTVAEESTAWPQVSRPIEFGGLGFGYKWNMGWMHDTLSYFEKDPIHRKHHHDQILFGLHYAFSENFILPLSHDEVVHGKRSILGRMPGDDWQRFANLRAYYAFMFGHPGKKLMFMGAEFGQEREWNHDHALDWHLLDQARHQGVQAVVRDLNKLYREVPALHEFDCDPAGFEWIVANDADHSVFAWMRKGASGRARCLVIANLTPTIHRDYRVRVPFTGRWREALNTDSAHYGGSNVGNDGAIETSGEIIPELVLTLPPLGVIFLVPEAA.

Asp398 serves as the catalytic Nucleophile. The active-site Proton donor is Glu451.

The protein belongs to the glycosyl hydrolase 13 family. GlgB subfamily. In terms of assembly, monomer.

The catalysed reaction is Transfers a segment of a (1-&gt;4)-alpha-D-glucan chain to a primary hydroxy group in a similar glucan chain.. Its pathway is glycan biosynthesis; glycogen biosynthesis. In terms of biological role, catalyzes the formation of the alpha-1,6-glucosidic linkages in glycogen by scission of a 1,4-alpha-linked oligosaccharide from growing alpha-1,4-glucan chains and the subsequent attachment of the oligosaccharide to the alpha-1,6 position. This Nitrobacter winogradskyi (strain ATCC 25391 / DSM 10237 / CIP 104748 / NCIMB 11846 / Nb-255) protein is 1,4-alpha-glucan branching enzyme GlgB.